The following is a 578-amino-acid chain: Proline--tRNA ligase (578 aa).

Belongs to the class-II aminoacyl-tRNA synthetase family. ProS type 1 subfamily. As to quaternary structure, homodimer.

It localises to the cytoplasm. The enzyme catalyses tRNA(Pro) + L-proline + ATP = L-prolyl-tRNA(Pro) + AMP + diphosphate. Functionally, catalyzes the attachment of proline to tRNA(Pro) in a two-step reaction: proline is first activated by ATP to form Pro-AMP and then transferred to the acceptor end of tRNA(Pro). As ProRS can inadvertently accommodate and process non-cognate amino acids such as alanine and cysteine, to avoid such errors it has two additional distinct editing activities against alanine. One activity is designated as 'pretransfer' editing and involves the tRNA(Pro)-independent hydrolysis of activated Ala-AMP. The other activity is designated 'posttransfer' editing and involves deacylation of mischarged Ala-tRNA(Pro). The misacylated Cys-tRNA(Pro) is not edited by ProRS. In Burkholderia multivorans (strain ATCC 17616 / 249), this protein is Proline--tRNA ligase.